The following is a 226-amino-acid chain: 2-dehydro-3-deoxy-phosphogluconate aldolase (226 aa).

The active-site Proton acceptor is the E57. Positions 61, 85, and 145 each coordinate pyruvate. K145 (schiff-base intermediate with substrate) is an active-site residue.

This sequence belongs to the KHG/KDPG aldolase family. As to quaternary structure, homotrimer.

It catalyses the reaction 2-dehydro-3-deoxy-6-phospho-D-gluconate = D-glyceraldehyde 3-phosphate + pyruvate. Its pathway is carbohydrate acid metabolism; 2-dehydro-3-deoxy-D-gluconate degradation; D-glyceraldehyde 3-phosphate and pyruvate from 2-dehydro-3-deoxy-D-gluconate: step 2/2. Its function is as follows. Involved in the degradation of glucose via the Entner-Doudoroff pathway. Catalyzes the reversible, stereospecific retro-aldol cleavage of 2-keto-3-deoxy-6-phosphogluconate (KDPG) to pyruvate and D-glyceraldehyde-3-phosphate. This is 2-dehydro-3-deoxy-phosphogluconate aldolase from Pseudomonas putida (Arthrobacter siderocapsulatus).